The chain runs to 206 residues: Ras-related protein Rab-18 (206 aa).

N-acetylmethionine is present on Met1. Ser17, Gly20, Lys21, Ser22, Ser23, Asp34, Pro35, Thr40, Gly66, Lys123, and Asp125 together coordinate GTP. Ser22 contributes to the Mg(2+) binding site. 2 consecutive short sequence motifs (switch) follow at residues 31 to 45 (DTFD…GVDF) and 63 to 80 (DTAG…YYRG). Thr40 lines the Mg(2+) pocket. Phosphoserine is present on Ser144. Residue Ala152 coordinates GTP. Cys199 carries S-palmitoyl cysteine lipidation. The residue at position 203 (Cys203) is a Cysteine methyl ester. Cys203 carries S-geranylgeranyl cysteine lipidation. Positions 204 to 206 (SVL) are cleaved as a propeptide — removed in mature form.

This sequence belongs to the small GTPase superfamily. Rab family. As to quaternary structure, interacts (in GTP-bound form) with ZFYVE1. Interacts with ZW10 and this interaction is enhanced in the presence of ZFYVE1. Interacts with BSCL2. Requires Mg(2+) as cofactor.

It localises to the endoplasmic reticulum membrane. The protein resides in the golgi apparatus. The protein localises to the cis-Golgi network membrane. Its subcellular location is the lipid droplet. It is found in the apical cell membrane. It catalyses the reaction GTP + H2O = GDP + phosphate + H(+). Its activity is regulated as follows. Regulated by guanine nucleotide exchange factors (GEFs) which promote the exchange of bound GDP for free GTP. Regulated by GTPase activating proteins (GAPs) which increase the GTP hydrolysis activity at the ER membrane. Inhibited by GDP dissociation inhibitors (GDIs) which prevent Rab-GDP dissociation. The small GTPases Rab are key regulators of intracellular membrane trafficking, from the formation of transport vesicles to their fusion with membranes. Rabs cycle between an inactive GDP-bound form and an active GTP-bound form that is able to recruit to membranes different sets of downstream effectors directly responsible for vesicle formation, movement, tethering and fusion. RAB18 is required for the localization of ZFYVE1 to lipid droplets and for its function in mediating the formation of endoplasmic reticulum-lipid droplets (ER-LD) contacts. Also required for maintaining endoplasmic reticulum structure. Plays a role in apical endocytosis/recycling. Plays a key role in eye and brain development and neurodegeneration. This chain is Ras-related protein Rab-18 (RAB18), found in Bos taurus (Bovine).